The following is a 126-amino-acid chain: Glycine cleavage system H protein (126 aa).

A Lipoyl-binding domain is found at 23-104 (TLTVGITDHA…PYESWLFKIK (82 aa)). K64 carries the post-translational modification N6-lipoyllysine.

This sequence belongs to the GcvH family. In terms of assembly, the glycine cleavage system is composed of four proteins: P, T, L and H. It depends on (R)-lipoate as a cofactor.

In terms of biological role, the glycine cleavage system catalyzes the degradation of glycine. The H protein shuttles the methylamine group of glycine from the P protein to the T protein. The chain is Glycine cleavage system H protein from Paraburkholderia xenovorans (strain LB400).